A 156-amino-acid chain; its full sequence is SsrA-binding protein (156 aa).

Residues 134–156 form a disordered region; the sequence is YDKRETLKRKEQDREMARALRKR.

It belongs to the SmpB family.

It localises to the cytoplasm. In terms of biological role, required for rescue of stalled ribosomes mediated by trans-translation. Binds to transfer-messenger RNA (tmRNA), required for stable association of tmRNA with ribosomes. tmRNA and SmpB together mimic tRNA shape, replacing the anticodon stem-loop with SmpB. tmRNA is encoded by the ssrA gene; the 2 termini fold to resemble tRNA(Ala) and it encodes a 'tag peptide', a short internal open reading frame. During trans-translation Ala-aminoacylated tmRNA acts like a tRNA, entering the A-site of stalled ribosomes, displacing the stalled mRNA. The ribosome then switches to translate the ORF on the tmRNA; the nascent peptide is terminated with the 'tag peptide' encoded by the tmRNA and targeted for degradation. The ribosome is freed to recommence translation, which seems to be the essential function of trans-translation. This is SsrA-binding protein from Latilactobacillus sakei subsp. sakei (strain 23K) (Lactobacillus sakei subsp. sakei).